Consider the following 94-residue polypeptide: MRTIAILAAILLVALQAQAESLQERADEATTQKQSGEDNQDLAISFAGNGLSALRTSGSQARATCYCRTGRCATRESLSGVCEISGRLYRLCCR.

The N-terminal stretch at 1 to 19 (MRTIAILAAILLVALQAQA) is a signal peptide. Cystine bridges form between Cys65–Cys93, Cys67–Cys82, and Cys72–Cys92.

The protein belongs to the alpha-defensin family. In terms of assembly, homodimer. Homotetramer. Interacts with B.antracis lef/lethal factor. In terms of processing, glycosylated. Post-translationally, proteolytically cleaved at Arg-62 by trypsin. Both the propeptide form proHD5/HD5(20-94) and HD5(56-94) are cleaved into the lumenal peptide form HD5(63-94) by trypsin. Unprocessed proHD5 exerts antimicrobial activities, but peptide potency is enhanced by peptide processing. Proteolytically cleaved in duodenal fluid; derived fragments are antimicrobially active against commensal bacteria (in vitro). (Microbial infection) The disulfide bridges and homodimerization are a prerequisite for the enhancement of S.flexneri adhesion and invasion. As to expression, expressed in the gastrointestinal, reproductive, and urinary tracts (at protein level). Expressed in Paneth cells of the small intestine (at protein level). Expressed throughout the urothelium of the lower urinary tract and in the collecting tubules of the kidney (at protein level). Expressed in stratified squamous epithelial cells of the female genital tract epithelia, such as in vagina, ectocervix, endocervix, endometrium, and fallopian tube (at protein level). Endometrial expression correlates with stages of the menstrual cycle: Expression is low during the early proliferative phase, increased during the mid- to late proliferative phase, peaks during the early secretory phase of the cycle, and decreases during the mid- to late secretory phase.

It is found in the secreted. The protein resides in the cytoplasmic vesicle. It localises to the secretory vesicle. Functionally, host-defense peptide that maintains sterility in the urogenital system. Has antimicrobial activity against a wide range of bacteria, including Gram-negative E.coli, P.aeruginosa and S.typhimurium, and Gram-positive E.aerogenes, S.aureus, B.cereus, E.faecium and L.monocytogenes. Confers resistance to intestinal infection by S.typhimurium. Exhibits antimicrobial activity against enteric commensal bacteria such as B.adolescentis, L.acidophilus, B.breve, L.fermentum, B.longum and S.thermophilus. Binds to bacterial membranes and causes membrane disintegration. Induces the secretion of the chemokine IL-8 by intestinal epithelial cells. Binds to B.antracis lef/lethal factor, a major virulence factor from B.anthracis, and neutralizes its enzymatic activity. Its function is as follows. (Microbial infection) Acts as a target for S.flexneri infection by binding to the bacterium, possibly via bacterial surface proteins, and thereby augmenting infectivity via enhanced bacterial adhesion and invasion of epithelial cells and tissues. The chain is Defensin alpha 5 (DEFA5) from Homo sapiens (Human).